A 1449-amino-acid polypeptide reads, in one-letter code: MSNEFVKQINRSIKSDDNLNDLEFEITKFQLLKKSNTLRTIIKSKDQLSEEQKKIIKQYIKKAIGFEINIEIMYYIDISDITLKQVVDQHWNHVCEKIIEKHPVLKEVLLNSPIVIEGEKIIIKNGSEFLCTFVNKKHIDREIKGYIKSFFGINSLVEVKYDESLANKNYNDEKLNENKEIAKKVIETMKAQAAQEKPVKKESSDNKHKSNGGNKGGYEKKSYKDEPKNENTILGRNIQGDTIDISSIDMGSGIVTISGDVFKTDIFETKTGRIILTFFITDYTSSIAVKCFLRDKDKEHVLENVKKGLYCKVRGEATMDPYAKEVVIMARDINKLTKIERMDTAEEKRVELHMHTTMSSMDAVTAASKIVERAAKFGHKAVAITDHGVVQAFPDAQIAAKKNNIKVIYGVEGYLADNGTPIVINGHEESFDDEYVVFDIETTGFSSKNDKIIEIGAVKLKDGEIVDSFSTFVDPKVNIPYKITELTSITQNMVNGQPTIDEVLPKFMEFVGNSVLVAHNAAFDVGFIKKNLMDMGKTLKNPVMDTVPLARYLYPDLKKVKLNLVAKHLGISLENHHRAVDDAKATAEILKFSFKKMKEEMDIHDVKTLNEKYLSNIDVKKLPLHHIIILAKNQTGIKNLYKLVSMAHLDYFARRPRLPKSIITEYREGLIIGSACEAGQLYKAVLEGKTDGELKEIASFYDYLEIQPIQNNEFLIRKGNVKDEEELRELNRKIYDLGKEMDKPVVATCDCHFLDPNDEVFRRIIMAGQGYGDADNQPPLYFRTTNEMMKEFEYLGEEACREVVIENTQKIADMVEAVKPIPDETFPPKIEGAEEEIRNMTMNKVHSIYGENLPEVVQKRLDKELNSIINNGYAVLYLIAQKLVAKSLEDGYLVGSRGSVGSSFVATMSDITEVNGLPPHYVCPNCKKSEFFLDGSISSGADLPDKNCPDCGAKYIKDGHDIPFETFLGFEGDKEPDIDLNFSGEYQAVVHKYTEVLFGKGYVFKAGTIGTVAEKTAYGFVKKYLQERGLVVSQAEIERLTIGCTGIKRTSGQHPGGIMVVPNDNEIYNFCPIQHPADDVNTDIITTHFDYHSISGRLLKLDILGHDDPTVLRMLQDLTGLDPKTIPLNDPKVISLFTSPDALGVTKEELGCEVGSYGLPEFGTKFVRQMLVDTQPKSFADLVRISGLSHGTDVWLNNAQYFIKEGYTTLKDCIATRDDIMVYLMYKDLPPKTAFTIMEKVRKGKGLSEEDEALMREKNVPDWYIESCKRIKYMFPKGHAVAYVMMAVRIAYYKVYYPEAYYTTYFTVRADDFDADLICKGEEAIKAKMEELNSLGNNISVKEKGLLTILEISYEMYKRGLNFLKVDLYKSEATKFKIEEDGIRPPLNALQGVGDNAAKSIVECRVNGEFISKEDLRLRSKVSKTVIETLDNHGCLEGMQESNQLSLFG.

The tract at residues 194-231 (AQEKPVKKESSDNKHKSNGGNKGGYEKKSYKDEPKNEN) is disordered. 2 stretches are compositionally biased toward basic and acidic residues: residues 197–208 (KPVKKESSDNKH) and 217–229 (GYEK…EPKN). The region spanning 435–590 (YVVFDIETTG…DDAKATAEIL (156 aa)) is the Exonuclease domain.

This sequence belongs to the DNA polymerase type-C family. PolC subfamily.

The protein resides in the cytoplasm. It carries out the reaction DNA(n) + a 2'-deoxyribonucleoside 5'-triphosphate = DNA(n+1) + diphosphate. Required for replicative DNA synthesis. This DNA polymerase also exhibits 3' to 5' exonuclease activity. The chain is DNA polymerase III PolC-type from Clostridium perfringens (strain 13 / Type A).